The following is a 257-amino-acid chain: S-methyl-5'-thioadenosine phosphorylase (257 aa).

Phosphate is bound by residues S10 and 50 to 51; that span reads RH. An intrachain disulfide couples C130 to C195. Substrate is bound at residue M180. T181 provides a ligand contact to phosphate. 204-206 contacts substrate; that stretch reads DYD. A disulfide bond links C246 and C248.

The protein belongs to the PNP/MTAP phosphorylase family. MTAP subfamily. In terms of assembly, homohexamer. Dimer of a homotrimer.

The catalysed reaction is S-methyl-5'-thioadenosine + phosphate = 5-(methylsulfanyl)-alpha-D-ribose 1-phosphate + adenine. The protein operates within amino-acid biosynthesis; L-methionine biosynthesis via salvage pathway; S-methyl-5-thio-alpha-D-ribose 1-phosphate from S-methyl-5'-thioadenosine (phosphorylase route): step 1/1. Its function is as follows. Catalyzes the reversible phosphorylation of S-methyl-5'-thioadenosine (MTA) to adenine and 5-methylthioribose-1-phosphate. Involved in the breakdown of MTA, a major by-product of polyamine biosynthesis. Responsible for the first step in the methionine salvage pathway after MTA has been generated from S-adenosylmethionine. Has broad substrate specificity with 6-aminopurine nucleosides as preferred substrates. In Pyrococcus furiosus (strain ATCC 43587 / DSM 3638 / JCM 8422 / Vc1), this protein is S-methyl-5'-thioadenosine phosphorylase.